A 500-amino-acid chain; its full sequence is POU domain, class 3, transcription factor 3 (500 aa).

Residues 32 to 52 (GGGGGGGGGGGGAGGGGGGMQ) are compositionally biased toward gly residues. 4 disordered regions span residues 32 to 63 (GGGG…SGAY), 122 to 190 (WSGS…WGAA), 231 to 319 (NGML…TPTS), and 461 to 500 (EKRM…TSVQ). Composition is skewed to pro residues over residues 134–146 (QQPP…PPQG) and 171–181 (HLGPPPPPPHQ). Over residues 241–251 (GGGGGGAGGGA) the composition is skewed to gly residues. Residues 270–287 (HHHHHHHHAHPHPPHPHH) show a composition bias toward basic residues. Gly residues predominate over residues 293 to 303 (HHGGGGGGAGP). The region spanning 314 to 388 (EDTPTSDDLE…LLNKWLEEAD (75 aa)) is the POU-specific domain. Positions 406 to 465 (KRKKRTSIEVSVKGALESHFLKCPKPSAQEITNLADSLQLEKEVVRVWFCNRRQKEKRMT) form a DNA-binding region, homeobox. Positions 468-486 (GIQQQTPDDVYSQVGTVSA) are enriched in polar residues.

The protein belongs to the POU transcription factor family. Class-3 subfamily. Homodimer. In terms of tissue distribution, brain.

It localises to the nucleus. Functionally, transcription factor that acts synergistically with SOX11 and SOX4. Plays a role in neuronal development. Is implicated in an enhancer activity at the embryonic met-mesencephalic junction; the enhancer element contains the octamer motif (5'-ATTTGCAT-3'). The chain is POU domain, class 3, transcription factor 3 from Homo sapiens (Human).